Here is a 1045-residue protein sequence, read N- to C-terminus: MEATTSLLDAAAVGDLVMLDPLSEESLLRTLQERFSRGEIYTYIGEVVISVNPYKPLPIYTPEKVEEYHNCNFFAVKPHIYAIADDAYRSLRDRDRDQCILITGESGAGKTEASKLVMSYVAAVSSKGEEVDKVKEQLLQSNPVLEAFGNAKTIRNDNSSRFGKYMDVEFDFKGDPLGGVISNYLLEKSRIVRHVKGERNFHIFYQLLAGGSAQLLQQLKLRPDCSHYGYLNHEKSVLPGMDDAANFRAMQDAMAIIGFAPAEVTALLEVTAVVLKLGNVKLSSCFQASGMEASSITEPRELQEISQLIGLDPSTLEQALCSRTVKVRDESVLTALSVSQGYYGRDALAKNIYSRLFDWLVNRINTSIQVKPGKQRKVMGVLDIYGFEIFQDNGFEQFIINYCNEKLQQIFILMTLKEEQEEYVREGIQWTPVEFFDNSIICDLIENSKVGILAMLDEECLRPGTVNEDTFITKLNQIFASHKRYESKETLNAKHVTDVSLPLRCFRIHHYAGKVTYNVTGFIEKNNDLLFRDLSQAMWAARHTLLRSLFPEGDPQRPSLKLPPTTGSQFKASVATLMKNLYSKNPNYIRCIKPNDTKTAMLFTPDLVLAQVRYLGLMENVRVRRAGYAFRQLYQPFLERYKMLSRKTWPRWTGGDREGAEVLLAELKFPPEELAYGHTKIFIRSPRTLFDLEKRRQQRVAELATLIQKMFRGWCCRKRYQLMRKSQILISAWFRGHMQRNRYKQMKRSVLLLQAYARGWKTRRMYRRYFRSDACTRLSNFIYRRMVQKYLMGLQKNLPPMAVLDRTWPPAPYKFLSDANQELKSIFYRWKCKKYREQLTPQQRAMLQAKLCASELFKDKKALYAQSLQQPFRGEYLGLTQNRKYQKLQAVAKDKLVMAEAVQKVNRANGKTVPRLLLLTTEHLVLADPKAAQPKMVLSLCDIQGASVSRFSDGLLALHLKETSTAGGKGDLLLVSPHLIELVTRLHQTLMDATAQALPLSIADQFSTRFPKGDVAVTVVESAKGGGDVPVCKKRGSHKMEILVH.

The Myosin motor domain occupies 11–697 (AAVGDLVMLD…TLFDLEKRRQ (687 aa)). 104–111 (GESGAGKT) contacts ATP. The tract at residues 574-596 (VATLMKNLYSKNPNYIRCIKPND) is actin-binding. IQ domains lie at 701–727 (AELA…RKSQ), 723–750 (MRKS…KRSV), and 746–774 (MKRS…RSDA). The region spanning 861-1044 (KALYAQSLQQ…RGSHKMEILV (184 aa)) is the TH1 domain.

This sequence belongs to the TRAFAC class myosin-kinesin ATPase superfamily. Myosin family. Intestine.

In terms of biological role, could play an important role in morphogenesis and function of intestinal microvilli. The chain is Unconventional myosin-Ia (MYO1A) from Gallus gallus (Chicken).